A 294-amino-acid polypeptide reads, in one-letter code: Non-selective voltage-gated ion channel VDAC2 (294 aa).

Position 2 is an N-acetylalanine (A2). Positions 23 and 31 each coordinate ATP. K31 carries the N6-acetyllysine; alternate modification. At K31 the chain carries N6-succinyllysine; alternate. A Glycyl lysine isopeptide (Lys-Gly) (interchain with G-Cter in ubiquitin); alternate cross-link involves residue K31. Transmembrane regions (beta stranded) follow at residues 37 to 46 and 50 to 58; these read LVKLDVKTKS and VEFSTSGSS. K64 participates in a covalent cross-link: Glycyl lysine isopeptide (Lys-Gly) (interchain with G-Cter in ubiquitin). A beta stranded membrane pass occupies residues 65-75; sequence VTGTLETKYKW. Y78 carries the post-translational modification Phosphotyrosine. A run of 3 beta stranded transmembrane segments spans residues 80–87, 91–100, and 106–115; these read LTFTEKWN, TLGTEIAIED, and LKLTFDTTFS. The residue at position 118 (T118) is a Phosphothreonine. K120 bears the N6-acetyllysine; alternate mark. Residue K120 forms a Glycyl lysine isopeptide (Lys-Gly) (interchain with G-Cter in ubiquitin); alternate linkage. A Glycyl lysine isopeptide (Lys-Gly) (interchain with G-Cter in ubiquitin) cross-link involves residue K121. Transmembrane regions (beta stranded) follow at residues 122 to 131, 134 to 141, 148 to 156, and 161 to 169; these read SGKIKSSYKR, INLGCDVD, AIHGSAVFG, and LAGYQMTFD. K172 is covalently cross-linked (Glycyl lysine isopeptide (Lys-Gly) (interchain with G-Cter in ubiquitin)). The next 6 membrane-spanning stretches (beta stranded) occupy residues 174–186, 189–196, 200–209, 213–222, 229–238, and 242–249; these read KLTR…GYRT, FQLHTNVN, EFGGSIYQKV, LDTSVNLAWT, RFGIAAKYQL, and ASISAKVN. S251 carries the phosphoserine modification. NAD(+) is bound by residues 253–255 and 271–275; these read LIG and SALVD. Transmembrane regions (beta stranded) follow at residues 253-262 and 265-274; these read LIGVGYTQTL and GVKLTLSALV. K277 carries the N6-acetyllysine; alternate modification. Residue K277 forms a Glycyl lysine isopeptide (Lys-Gly) (interchain with G-Cter in ubiquitin); alternate linkage. A beta stranded membrane pass occupies residues 284 to 293; that stretch reads HKLGLALELE.

It belongs to the eukaryotic mitochondrial porin family. In terms of assembly, monomer, homodimer and higher order oligomers; formation of higher order structures is necessary for scramblase activity. Interacts with ARMC12 in a TBC1D21-dependent manner. Interacts with KLC3. Interacts with SPATA33. Interacts with PPP3CC in a SPATA33-dependent manner. Post-translationally, ubiquitinated by PRKN during mitophagy, leading to its degradation and enhancement of mitophagy. Deubiquitinated by USP30.

It localises to the mitochondrion outer membrane. It is found in the membrane. It carries out the reaction chloride(in) = chloride(out). The enzyme catalyses K(+)(in) = K(+)(out). It catalyses the reaction a 1,2-diacyl-sn-glycero-3-phospho-L-serine(in) = a 1,2-diacyl-sn-glycero-3-phospho-L-serine(out). The catalysed reaction is a 1,2-diacyl-sn-glycero-3-phosphocholine(in) = a 1,2-diacyl-sn-glycero-3-phosphocholine(out). It carries out the reaction a 1,2-diacyl-sn-glycero-3-phospho-(1D-myo-inositol)(in) = a 1,2-diacyl-sn-glycero-3-phospho-(1D-myo-inositol)(out). Functionally, non-selective voltage-gated ion channel that mediates the transport of anions and cations through the mitochondrion outer membrane and plasma membrane. The channel adopts an open conformation at zero mV and a closed conformation at both positive and negative potentials. There are two populations of channels; the main that functions in a lower open-state conductance with lower ion selectivity, that switch, in a voltage-dependent manner, from the open to a low-conducting 'closed' state and the other that has a normal ion selectivity in the typical high conductance, 'open' state. Binds various lipids, including the sphingolipid ceramide, the phospholipid phosphatidylcholine, and the sterols cholesterol and oxysterol. Binding of ceramide promotes the mitochondrial outer membrane permeabilization (MOMP) apoptotic pathway. In terms of biological role, catalyzes the scrambling of phospholipids across the outer mitochondrial membrane; the mechanism is unrelated to channel activity and is capable of translocating both anionic and zwitterionic phospholipids. The protein is Non-selective voltage-gated ion channel VDAC2 of Oryctolagus cuniculus (Rabbit).